A 569-amino-acid polypeptide reads, in one-letter code: 4-coumarate-CoA ligase 2 (569 aa).

Positions 1-24 are disordered; the sequence is MITIAESHPQIHHSPPDTTAPSTP. Residues 216-220, H265, 337-339, 359-360, T364, D448, R463, and K554 contribute to the ATP site; these read SSGTT, AAP, and QG. Residues 290–359 are SBD1; that stretch reads EMEGMLETIQ…GRLPQAVLGQ (70 aa). The segment at 360 to 427 is SBD2; sequence GYGMTEAGPV…VRGPQIMKGY (68 aa).

The protein belongs to the ATP-dependent AMP-binding enzyme family. Mostly expressed in stems, and, to a lower extent, in bulbs.

The enzyme catalyses (E)-4-coumarate + ATP + CoA = (E)-4-coumaroyl-CoA + AMP + diphosphate. The protein operates within phytoalexin biosynthesis; 3,4',5-trihydroxystilbene biosynthesis; 3,4',5-trihydroxystilbene from trans-4-coumarate: step 1/2. Produces CoA thioesters of a variety of hydroxy- and methoxy-substituted cinnamic acids, which are used to synthesize several phenylpropanoid-derived compounds, including anthocyanins, flavonoids, isoflavonoids, coumarins, lignin, suberin and wall-bound phenolics. This chain is 4-coumarate-CoA ligase 2, found in Narcissus pseudonarcissus (Daffodil).